Reading from the N-terminus, the 538-residue chain is SWM histone demethylase complex subunit phf2 (538 aa).

3 disordered regions span residues 28-47 (RFPN…NQNG), 98-150 (EIES…SSPL), and 198-222 (TKSG…RRRG). Positions 98–111 (EIESSKNQETDAKS) are enriched in basic and acidic residues. The PHD-type zinc-finger motif lies at 232–288 (AMKCSVCQRLQSPPKNRIVFCDGCNTPFHQLCHEPYISDELLDSPNGEWFCDDCIRR). Over residues 367 to 392 (GDQYLSLNNGTESQSKTTKHSTSLPS) the composition is skewed to polar residues. The segment at 367-396 (GDQYLSLNNGTESQSKTTKHSTSLPSTEPV) is disordered.

As to quaternary structure, component of the SWM histone demethylase complex composed of at least lsd1, lsd2, phf1 and phf2.

Its subcellular location is the nucleus. Functionally, component of the SWM histone demethylase complex that specifically demethylates H3K9me2, a specific tag for epigenetic transcriptional activation, thereby acting as a corepressor. Has a role in regulating heterochromatin propagation and euchromatic transcription. This chain is SWM histone demethylase complex subunit phf2 (phf2), found in Schizosaccharomyces pombe (strain 972 / ATCC 24843) (Fission yeast).